We begin with the raw amino-acid sequence, 247 residues long: Carboxy-S-adenosyl-L-methionine synthase (247 aa).

S-adenosyl-L-methionine-binding positions include tyrosine 40, 65–67 (GSS), 90–91 (DN), 122–123 (DI), asparagine 137, and arginine 204.

The protein belongs to the class I-like SAM-binding methyltransferase superfamily. Cx-SAM synthase family. As to quaternary structure, homodimer.

The catalysed reaction is prephenate + S-adenosyl-L-methionine = carboxy-S-adenosyl-L-methionine + 3-phenylpyruvate + H2O. Functionally, catalyzes the conversion of S-adenosyl-L-methionine (SAM) to carboxy-S-adenosyl-L-methionine (Cx-SAM). This Pseudomonas fluorescens (strain SBW25) protein is Carboxy-S-adenosyl-L-methionine synthase.